Here is a 452-residue protein sequence, read N- to C-terminus: F-box only protein 47 (452 aa).

The F-box domain occupies 41–91 (FGNFKALPLEIFQIILKYLSVKDISMLSMVSKTVSQHIINYISTSSGSKRL).

In terms of assembly, part of a SCF (SKP1-cullin-F-box) protein ligase complex. As to expression, widely expressed, with highest levels in kidney, liver and pancreas. Down-regulated in tumors.

Its function is as follows. Probably recognizes and binds to some phosphorylated proteins and promotes their ubiquitination and degradation. The sequence is that of F-box only protein 47 from Homo sapiens (Human).